Here is a 1008-residue protein sequence, read N- to C-terminus: Ubiquitin carboxyl-terminal hydrolase 16 (1008 aa).

A helical membrane pass occupies residues 7 to 27 (LGISSLVLVVSLVLPLIGLFV). Cys-74, Cys-77, Cys-85, Cys-88, Cys-94, Cys-98, His-107, and Cys-111 together coordinate Zn(2+). The segment at 74 to 111 (CPVCYCLATTRCSRCKAVRYCSGKCQIIHWRQGHKDEC) adopts an MYND-type zinc-finger fold. 5 disordered regions span residues 122 to 149 (DESDSDLRLGEENGQNTPEETLLVGPEP), 159 to 178 (LSNRARSPEDGNGDIADNKD), 187 to 233 (VSVA…LDAH), 275 to 309 (SVHKPEDDAGQNQSQSRSLHSLVTDRHPVSADPSL), and 326 to 379 (SDSC…YISD). A compositionally biased stretch (low complexity) spans 193–203 (SGSSFSGFSSS). Residues 222 to 233 (ESERSESLLDAH) are compositionally biased toward basic and acidic residues. Polar residues predominate over residues 284 to 295 (GQNQSQSRSLHS). The segment covering 340–351 (SSLHFSFGSGSS) has biased composition (low complexity). One can recognise a USP domain in the interval 542 to 847 (CGLINVGNSC…GAYMLFYARC (306 aa)). Residue Cys-551 is the Nucleophile of the active site. His-807 functions as the Proton acceptor in the catalytic mechanism. Disordered regions lie at residues 859–905 (KTEA…GNIQ) and 952–1008 (FIFG…GGER). Low complexity-rich tracts occupy residues 878–888 (STISRSVSTSS) and 965–992 (SETPSPTSSSSSSSPPFTRRSPLSRSSP).

The protein belongs to the peptidase C19 family. As to quaternary structure, interacts with SHM1 and SHM4. Interacts with HIPP27. As to expression, expressed in flowers, siliques, rosette leaves, cauline leaves, stems and at a lower level in roots. In roots, expressed in the sieve elements.

It is found in the membrane. The catalysed reaction is Thiol-dependent hydrolysis of ester, thioester, amide, peptide and isopeptide bonds formed by the C-terminal Gly of ubiquitin (a 76-residue protein attached to proteins as an intracellular targeting signal).. Its function is as follows. Recognizes and hydrolyzes the peptide bond at the C-terminal Gly of ubiquitin. Involved in the processing of poly-ubiquitin precursors as well as that of ubiquitinated proteins. Involved in salt tolerance by modulating sodium transport activity and repressing cell death at least partially through modulating SHM1 stability and activity. Involved in cadmium tolerance by interacting with HIPP27 and probably modulating its stability. This chain is Ubiquitin carboxyl-terminal hydrolase 16 (UBP16), found in Arabidopsis thaliana (Mouse-ear cress).